Here is a 112-residue protein sequence, read N- to C-terminus: Photosystem II reaction center Psb28 protein (112 aa).

This sequence belongs to the Psb28 family. Part of the photosystem II complex.

The protein localises to the cellular thylakoid membrane. The polypeptide is Photosystem II reaction center Psb28 protein (Synechocystis sp. (strain ATCC 27184 / PCC 6803 / Kazusa)).